We begin with the raw amino-acid sequence, 233 residues long: MVDLHSLPIGSRPSAAIRNNGPDRLVLERLKLRELAEGWPSYRDSCEWENFESIFHPGAHVYTTWSGRVPYQDFITASKAGMDKGAFIMHRCHGTSTDINAEGTRAVTKLKAIITQRFEVDGAEFDVEADCRFCFFFEKVGSRWGAQLVRHWYEKDKMIPANPARFPAVDEERLKGYPPGYRYLAYWQEATMGVKVLLDMPGHRRHVGTPNLEKHDLLYRQAKQWLEGEQIEI.

This sequence belongs to the PEP2 family.

May contribute to the ability of the fungus to cause disease on pea plants. The polypeptide is PEP2-like protein NECHADRAFT_97050 (Fusarium vanettenii (strain ATCC MYA-4622 / CBS 123669 / FGSC 9596 / NRRL 45880 / 77-13-4) (Fusarium solani subsp. pisi)).